The primary structure comprises 308 residues: Ribonuclease HIII (308 aa).

Positions 88–304 constitute an RNase H type-2 domain; it reads FHCIGSDEAG…RDKAIHLINQ (217 aa). D94, E95, and D199 together coordinate a divalent metal cation.

This sequence belongs to the RNase HII family. RnhC subfamily. Mn(2+) serves as cofactor. It depends on Mg(2+) as a cofactor.

The protein resides in the cytoplasm. The catalysed reaction is Endonucleolytic cleavage to 5'-phosphomonoester.. Its function is as follows. Endonuclease that specifically degrades the RNA of RNA-DNA hybrids. In Staphylococcus epidermidis (strain ATCC 35984 / DSM 28319 / BCRC 17069 / CCUG 31568 / BM 3577 / RP62A), this protein is Ribonuclease HIII.